Here is a 243-residue protein sequence, read N- to C-terminus: Pyrimidodiazepine synthase (243 aa).

A GST N-terminal domain is found at 20–102; that stretch reads GILRLYSMRF…YLDEQYPLRP (83 aa). The Nucleophile role is filled by Cys-30. Glutathione contacts are provided by residues Lys-57, Val-70, and 86–87; that span reads ES. Residues 107–230 enclose the GST C-terminal domain; sequence DPLKKVQDKL…VQAEFLRTRS (124 aa).

This sequence belongs to the GST superfamily. Omega family. Homodimer.

The catalysed reaction is 2-amino-6-acetyl-3,7,8,9-tetrahydro-3H-pyrimido[4,5-b][1,4]diazepin-4-one + glutathione disulfide + H2O = 6-pyruvoyl-5,6,7,8-tetrahydropterin + 2 glutathione. Mediates the conversion of 2-amino-4-oxo-6-pyruvoyl-5,6,7,8-tetrahydropteridine (6-PTP; also named 6-pyruvoyltetrahydropterin) to 2-amino-6-acetyl-3,7,8,9-tetrahydro-3H-pyrimido(4,5-b)[1,4]diazepin-4-one (pyrimidodiazepine or PDA), a key intermediate in red eye pigment drosopterin biosynthesis. This is Pyrimidodiazepine synthase from Drosophila melanogaster (Fruit fly).